The sequence spans 80 residues: 14-3-3-like protein 1 (80 aa).

Belongs to the 14-3-3 family.

This Pseudotsuga menziesii (Douglas-fir) protein is 14-3-3-like protein 1.